Here is a 400-residue protein sequence, read N- to C-terminus: 1-deoxy-D-xylulose 5-phosphate reductoisomerase (400 aa).

The NADPH site is built by T17, G18, S19, I20, and N131. Position 132 (K132) interacts with 1-deoxy-D-xylulose 5-phosphate. NADPH is bound at residue E133. Mn(2+) is bound at residue D157. Residues S158, E159, S188, and H211 each contribute to the 1-deoxy-D-xylulose 5-phosphate site. E159 serves as a coordination point for Mn(2+). An NADPH-binding site is contributed by G217. Positions 224, 229, 230, and 233 each coordinate 1-deoxy-D-xylulose 5-phosphate. Mn(2+) is bound at residue E233.

Belongs to the DXR family. Mg(2+) serves as cofactor. It depends on Mn(2+) as a cofactor.

It carries out the reaction 2-C-methyl-D-erythritol 4-phosphate + NADP(+) = 1-deoxy-D-xylulose 5-phosphate + NADPH + H(+). The protein operates within isoprenoid biosynthesis; isopentenyl diphosphate biosynthesis via DXP pathway; isopentenyl diphosphate from 1-deoxy-D-xylulose 5-phosphate: step 1/6. Functionally, catalyzes the NADPH-dependent rearrangement and reduction of 1-deoxy-D-xylulose-5-phosphate (DXP) to 2-C-methyl-D-erythritol 4-phosphate (MEP). This chain is 1-deoxy-D-xylulose 5-phosphate reductoisomerase, found in Pseudomonas putida (strain ATCC 700007 / DSM 6899 / JCM 31910 / BCRC 17059 / LMG 24140 / F1).